The sequence spans 226 residues: Endonuclease NucS (226 aa).

This sequence belongs to the NucS endonuclease family.

It localises to the cytoplasm. Its function is as follows. Cleaves both 3' and 5' ssDNA extremities of branched DNA structures. This Mycobacterium ulcerans (strain Agy99) protein is Endonuclease NucS.